A 188-amino-acid chain; its full sequence is GTPase KRas (188 aa).

Residues G10 to A18, V29 to T35, A59 to G60, and N116 to D119 each bind GTP. Positions Y32 to Y40 match the Effector region motif. The segment at K167 to M188 is disordered. Position 185 is a cysteine methyl ester (C185). C185 carries the S-farnesyl cysteine lipid modification. Residues V186–M188 constitute a propeptide, removed in mature form.

The protein belongs to the small GTPase superfamily. Ras family.

Its subcellular location is the cell membrane. It localises to the cytoplasm. The enzyme catalyses GTP + H2O = GDP + phosphate + H(+). Alternates between an inactive form bound to GDP and an active form bound to GTP. Activated by a guanine nucleotide-exchange factor (GEF) and inactivated by a GTPase-activating protein (GAP). In terms of biological role, ras proteins bind GDP/GTP and possess intrinsic GTPase activity. Plays an important role in the regulation of cell proliferation. May play a role in promoting oncogenic events by inducing transcriptional silencing of tumor suppressor genes (TSGs). The sequence is that of GTPase KRas (kras) from Cyprinus carpio (Common carp).